The sequence spans 232 residues: Flagellar L-ring protein (232 aa).

Positions 1 to 21 (MQKYALHAYPVMALMVATLTG) are cleaved as a signal peptide. Cysteine 22 carries the N-palmitoyl cysteine lipid modification. Cysteine 22 carries the S-diacylglycerol cysteine lipid modification.

Belongs to the FlgH family. The basal body constitutes a major portion of the flagellar organelle and consists of four rings (L,P,S, and M) mounted on a central rod.

The protein localises to the cell outer membrane. The protein resides in the bacterial flagellum basal body. Functionally, assembles around the rod to form the L-ring and probably protects the motor/basal body from shearing forces during rotation. The sequence is that of Flagellar L-ring protein from Salmonella choleraesuis (strain SC-B67).